The sequence spans 455 residues: tRNA-2-methylthio-N(6)-dimethylallyladenosine synthase (455 aa).

The 116-residue stretch at lysine 18–alanine 133 folds into the MTTase N-terminal domain. [4Fe-4S] cluster-binding residues include cysteine 27, cysteine 63, cysteine 97, cysteine 171, cysteine 175, and cysteine 178. One can recognise a Radical SAM core domain in the interval cysteine 157 to glutamate 390. Residues glutamine 393–valine 455 form the TRAM domain.

The protein belongs to the methylthiotransferase family. MiaB subfamily. As to quaternary structure, monomer. It depends on [4Fe-4S] cluster as a cofactor.

Its subcellular location is the cytoplasm. The catalysed reaction is N(6)-dimethylallyladenosine(37) in tRNA + (sulfur carrier)-SH + AH2 + 2 S-adenosyl-L-methionine = 2-methylsulfanyl-N(6)-dimethylallyladenosine(37) in tRNA + (sulfur carrier)-H + 5'-deoxyadenosine + L-methionine + A + S-adenosyl-L-homocysteine + 2 H(+). Its function is as follows. Catalyzes the methylthiolation of N6-(dimethylallyl)adenosine (i(6)A), leading to the formation of 2-methylthio-N6-(dimethylallyl)adenosine (ms(2)i(6)A) at position 37 in tRNAs that read codons beginning with uridine. The protein is tRNA-2-methylthio-N(6)-dimethylallyladenosine synthase of Bacteroides thetaiotaomicron (strain ATCC 29148 / DSM 2079 / JCM 5827 / CCUG 10774 / NCTC 10582 / VPI-5482 / E50).